The following is a 488-amino-acid chain: HSPB1-associated protein 1 (488 aa).

The interval 88-208 (ETTCNYVEAT…EDTPFLYPTR (121 aa)) is interaction with HSPB1. The 165-residue stretch at 124 to 288 (WAYADYKYFV…HLARVEEAIT (165 aa)) folds into the JmjC domain. Residues 369–379 (QTGSQNLTTGT) show a composition bias toward polar residues. The interval 369 to 415 (QTGSQNLTTGTDKPEAASPFGPDLVPVAQRSEEPPSERGGIFGSDGK) is disordered.

As to quaternary structure, interacts with CRYAB and HSPB1. In terms of tissue distribution, widely expressed.

The protein localises to the cytoplasm. May play a role in cellular stress response. The chain is HSPB1-associated protein 1 (HSPBAP1) from Homo sapiens (Human).